A 509-amino-acid polypeptide reads, in one-letter code: Cytochrome P450 monooxygenase cpaH (509 aa).

Asn-15 carries N-linked (GlcNAc...) asparagine glycosylation. The helical transmembrane segment at 31–51 threads the bilayer; it reads TTILLIGVTYCILVGIYRVTL. N-linked (GlcNAc...) asparagine glycosylation is found at Asn-306 and Asn-412. Cys-453 serves as a coordination point for heme.

It belongs to the cytochrome P450 family. It depends on heme as a cofactor.

The protein resides in the membrane. Its pathway is secondary metabolite biosynthesis. Its function is as follows. Cytochrome P450 monooxygenase; part of the gene cluster that mediates the biosynthesis of the fungal neurotoxin cyclopiazonic acid (CPA), a nanomolar inhibitor of Ca(2+)-ATPase with a unique pentacyclic indole tetramic acid scaffold. The hybrid two module polyketide synthase-nonribosomal peptide synthetase (PKS-NRPS) cpaS incorporates acetyl-CoA, malonyl-CoA, and tryptophan (Trp) and utilizes a C-terminal redox-incompetent reductase domain to make and release the tryptophan tetramic acid, cyclo-acetoacetyl-L-tryptophan (c-AATrp), as the first intermediate in the pathway. CpaS catalyzes a Dieckmann-type cyclization on the N-acetoacetyl-Trp intermediate bound in thioester linkage to the phosphopantetheinyl arm of the T domain to form and release c-AATrp. CpaD then regiospecifically dimethylallylates c-AATrp to form beta-cyclopiazonic acid. CpaD discriminates against free Trp but accepts tryptophan-containing thiohydantoins, diketopiperazines, and linear peptides as substrates for C4-prenylation and also acts as a regiospecific O-dimethylallyltransferase (DMAT) on a tyrosine-derived tetramic acid. The beta-cyclopiazonate dehydrogenase cpaO then carries out the dehydrogenation of beta-CPA to yield an unstable enimine product, which is captured by intramolecular cyclization to create the pentacyclic fused scaffold of alpha-cyclopiazonate. Finally, the cytochrome P450 monooxygenase cpaH mediates the conversion of CPA into the less toxic 2-oxocyclopiazonic acid, the end product of the CPA pathway in A.oryza. This is Cytochrome P450 monooxygenase cpaH from Aspergillus oryzae (Yellow koji mold).